The following is a 318-amino-acid chain: NADH-ubiquinone oxidoreductase chain 1 (318 aa).

8 helical membrane-spanning segments follow: residues 2-22 (FMINILTLILPILLAVAFLTL), 70-90 (MFIIAPVLALTLALTMWSPLP), 100-120 (LGVLFMLAMSSLAVYSILWSG), 136-156 (VAQTISYEVTLAIILLSVLLM), 172-192 (LWLLFPSWPLAMMWFISTLAE), 222-242 (LFFLAEYANIIMMNMLTAILF), 253-273 (ELYTANLIIKTLLLTMSFLWI), and 294-314 (LPLTLALCMWHISLPIMTASI).

Belongs to the complex I subunit 1 family. Core subunit of respiratory chain NADH dehydrogenase (Complex I) which is composed of 45 different subunits.

The protein resides in the mitochondrion inner membrane. The enzyme catalyses a ubiquinone + NADH + 5 H(+)(in) = a ubiquinol + NAD(+) + 4 H(+)(out). Its function is as follows. Core subunit of the mitochondrial membrane respiratory chain NADH dehydrogenase (Complex I) which catalyzes electron transfer from NADH through the respiratory chain, using ubiquinone as an electron acceptor. Essential for the catalytic activity and assembly of complex I. In Balaenoptera physalus (Fin whale), this protein is NADH-ubiquinone oxidoreductase chain 1 (MT-ND1).